The chain runs to 274 residues: Dermonecrotic toxin SdSicTox-betaIIB1bxiii (274 aa).

Residue histidine 5 is part of the active site. Glutamate 25 and aspartate 27 together coordinate Mg(2+). Histidine 41 serves as the catalytic Nucleophile. 2 cysteine pairs are disulfide-bonded: cysteine 45/cysteine 51 and cysteine 47/cysteine 190. Residue aspartate 85 participates in Mg(2+) binding.

Belongs to the arthropod phospholipase D family. Class II subfamily. Mg(2+) serves as cofactor. As to expression, expressed by the venom gland.

The protein resides in the secreted. It carries out the reaction an N-(acyl)-sphingosylphosphocholine = an N-(acyl)-sphingosyl-1,3-cyclic phosphate + choline. The catalysed reaction is an N-(acyl)-sphingosylphosphoethanolamine = an N-(acyl)-sphingosyl-1,3-cyclic phosphate + ethanolamine. The enzyme catalyses a 1-acyl-sn-glycero-3-phosphocholine = a 1-acyl-sn-glycero-2,3-cyclic phosphate + choline. It catalyses the reaction a 1-acyl-sn-glycero-3-phosphoethanolamine = a 1-acyl-sn-glycero-2,3-cyclic phosphate + ethanolamine. Dermonecrotic toxins cleave the phosphodiester linkage between the phosphate and headgroup of certain phospholipids (sphingolipid and lysolipid substrates), forming an alcohol (often choline) and a cyclic phosphate. This toxin acts on sphingomyelin (SM). It may also act on ceramide phosphoethanolamine (CPE), lysophosphatidylcholine (LPC) and lysophosphatidylethanolamine (LPE), but not on lysophosphatidylserine (LPS), and lysophosphatidylglycerol (LPG). It acts by transphosphatidylation, releasing exclusively cyclic phosphate products as second products. Induces dermonecrosis, hemolysis, increased vascular permeability, edema, inflammatory response, and platelet aggregation. This Sicarius cf. damarensis (strain GJB-2008) (Six-eyed sand spider) protein is Dermonecrotic toxin SdSicTox-betaIIB1bxiii.